Reading from the N-terminus, the 500-residue chain is Histidine--tRNA ligase (500 aa).

Belongs to the class-II aminoacyl-tRNA synthetase family. As to quaternary structure, homodimer.

Its subcellular location is the cytoplasm. The enzyme catalyses tRNA(His) + L-histidine + ATP = L-histidyl-tRNA(His) + AMP + diphosphate + H(+). The sequence is that of Histidine--tRNA ligase (hisS) from Mesorhizobium japonicum (strain LMG 29417 / CECT 9101 / MAFF 303099) (Mesorhizobium loti (strain MAFF 303099)).